The chain runs to 216 residues: Adenylate kinase (216 aa).

10 to 15 (GAGKGT) contributes to the ATP binding site. Positions 30–59 (STGDIFRKNIKEGTELGKKAKEYMDQGLLV) are NMP. AMP contacts are provided by residues threonine 31, arginine 36, 57-59 (LLV), 85-88 (GFPR), and glutamine 92. An LID region spans residues 126-163 (GRRICKSCGATYHVEFNPPKVEGVCDVCQGELYQRADD). Arginine 127 contributes to the ATP binding site. Zn(2+) contacts are provided by cysteine 130 and cysteine 133. 136–137 (TY) serves as a coordination point for ATP. Zn(2+)-binding residues include cysteine 150 and cysteine 153. AMP contacts are provided by arginine 160 and arginine 171. Glutamine 199 lines the ATP pocket.

It belongs to the adenylate kinase family. Monomer.

Its subcellular location is the cytoplasm. It carries out the reaction AMP + ATP = 2 ADP. It functions in the pathway purine metabolism; AMP biosynthesis via salvage pathway; AMP from ADP: step 1/1. Its function is as follows. Catalyzes the reversible transfer of the terminal phosphate group between ATP and AMP. Plays an important role in cellular energy homeostasis and in adenine nucleotide metabolism. This chain is Adenylate kinase, found in Clostridioides difficile (strain 630) (Peptoclostridium difficile).